Reading from the N-terminus, the 209-residue chain is Octanoyltransferase (209 aa).

Positions 30 to 209 (DNEPEIVYLV…IQTEFNKIFK (180 aa)) constitute a BPL/LPL catalytic domain. Substrate contacts are provided by residues 69-76 (RGGKFTFH), 143-145 (AIG), and 156-158 (GVA). The active-site Acyl-thioester intermediate is the Cys174.

The protein belongs to the LipB family.

The protein resides in the cytoplasm. The catalysed reaction is octanoyl-[ACP] + L-lysyl-[protein] = N(6)-octanoyl-L-lysyl-[protein] + holo-[ACP] + H(+). The protein operates within protein modification; protein lipoylation via endogenous pathway; protein N(6)-(lipoyl)lysine from octanoyl-[acyl-carrier-protein]: step 1/2. In terms of biological role, catalyzes the transfer of endogenously produced octanoic acid from octanoyl-acyl-carrier-protein onto the lipoyl domains of lipoate-dependent enzymes. Lipoyl-ACP can also act as a substrate although octanoyl-ACP is likely to be the physiological substrate. This Rickettsia felis (strain ATCC VR-1525 / URRWXCal2) (Rickettsia azadi) protein is Octanoyltransferase.